The primary structure comprises 282 residues: Mitochondrial outer membrane protein porin (282 aa).

The protein belongs to the eukaryotic mitochondrial porin family.

The protein resides in the mitochondrion outer membrane. In terms of biological role, forms a channel through the cell membrane that allows diffusion of small hydrophilic molecules. The channel adopts an open conformation at low or zero membrane potential and a closed conformation at potentials above 30-40 mV. The open state has a weak anion selectivity whereas the closed state is cation-selective. This chain is Mitochondrial outer membrane protein porin (POR1), found in Candida albicans (strain SC5314 / ATCC MYA-2876) (Yeast).